The sequence spans 418 residues: Serine hydroxymethyltransferase (418 aa).

(6S)-5,6,7,8-tetrahydrofolate contacts are provided by residues Leu-121 and 125-127; that span reads GHL. Position 230 is an N6-(pyridoxal phosphate)lysine (Lys-230). (6S)-5,6,7,8-tetrahydrofolate contacts are provided by residues Glu-246 and 355 to 357; that span reads SPF.

The protein belongs to the SHMT family. As to quaternary structure, homodimer. The cofactor is pyridoxal 5'-phosphate.

Its subcellular location is the cytoplasm. The catalysed reaction is (6R)-5,10-methylene-5,6,7,8-tetrahydrofolate + glycine + H2O = (6S)-5,6,7,8-tetrahydrofolate + L-serine. The protein operates within one-carbon metabolism; tetrahydrofolate interconversion. It participates in amino-acid biosynthesis; glycine biosynthesis; glycine from L-serine: step 1/1. In terms of biological role, catalyzes the reversible interconversion of serine and glycine with tetrahydrofolate (THF) serving as the one-carbon carrier. This reaction serves as the major source of one-carbon groups required for the biosynthesis of purines, thymidylate, methionine, and other important biomolecules. Also exhibits THF-independent aldolase activity toward beta-hydroxyamino acids, producing glycine and aldehydes, via a retro-aldol mechanism. The sequence is that of Serine hydroxymethyltransferase from Streptococcus pneumoniae (strain ATCC 700669 / Spain 23F-1).